We begin with the raw amino-acid sequence, 843 residues long: MNCCWQVVEPCYKSALSYLCVKVGNICMLKENLVLLKSAFDELKAEKEDVVNRVNAGELKGGQRLAIVATWLSQVEIIEENTKQLMDVASARDASSQNASAVRRRLSTSGCWFSTCNLGEKVFKKLTEVKSLSGKDFQEVTEQPPPPVVEVRLCQQTVGLDTTLEKTWESLRKDENRMLGIFGMGGVGKTTLLTLINNKFVEVSDDYDVVIWVESSKDADVGKIQDAIGERLHICDNNWSTYSRGKKASEISRVLRDMKPRFVLLLDDLWEDVSLTAIGIPVLGKKYKVVFTTRSKDVCSVMRANEDIEVQCLSENDAWDLFDMKVHCDGLNEISDIAKKIVAKCCGLPLALEVIRKTMASKSTVIQWRRALDTLESYRSEMKGTEKGIFQVLKLSYDYLKTKNAKCFLYCALFPKAYYIKQDELVEYWIGEGFIDEKDGRERAKDRGYEIIDNLVGAGLLLESNKKVYMHDMIRDMALWIVSEFRDGERYVVKTDAGLSQLPDVTDWTTVTKMSLFNNEIKNIPDDPEFPDQTNLVTLFLQNNRLVDIVGKFFLVMSTLVVLDLSWNFQITELPKGISALVSLRLLNLSGTSIKHLPEGLGVLSKLIHLNLESTSNLRSVGLISELQKLQVLRFYGSAAALDCCLLKILEQLKGLQLLTVTVNNDSVLEEFLGSTRLAGMTQGIYLEGLKVSFAAIGTLSSLHKLEMVNCDITESGTEWEGKRRDQYSPSTSSSEITPSNPWFKDLSAVVINSCIHLKDLTWLMYAANLESLSVESSPKMTELINKEKAQGVGVDPFQELQVLRLHYLKELGSIYGSQVSFPKLKLNKVDIENCPNLHQRPL.

A coiled-coil region spans residues 28-58 (MLKENLVLLKSAFDELKAEKEDVVNRVNAGE). The NB-ARC domain maps to 141 to 440 (TEQPPPPVVE…GEGFIDEKDG (300 aa)). Residue 183 to 190 (GMGGVGKT) coordinates ATP. LRR repeat units follow at residues 510 to 531 (TVTKMSLFNNEIKNIPDDPEFP), 535 to 556 (NLVTLFLQNNRLVDIVGKFFLV), 559 to 581 (TLVVLDLSWNFQITELPKGISAL), 583 to 604 (SLRLLNLSGTSIKHLPEGLGVL), and 606 to 628 (KLIHLNLESTSNLRSVGLISELQ).

The protein belongs to the disease resistance NB-LRR family.

Probable disease resistance protein. This chain is Probable disease resistance protein At5g47250, found in Arabidopsis thaliana (Mouse-ear cress).